Here is an 88-residue protein sequence, read N- to C-terminus: Serine protease inhibitor Kazal-type 11 (88 aa).

Residues 1–24 form the signal peptide; the sequence is MSSTWIKFLFILTLVLLPYFVAES. Residues 32–87 form the Kazal-like domain; that stretch reads LRKVPNCTLYKSESDCSRTLIPVCADNQMTYYNACYFCLEQLVSPIKYKYHGICTK. Asn-37 carries N-linked (GlcNAc...) asparagine glycosylation. 3 disulfide bridges follow: Cys-38–Cys-69, Cys-47–Cys-66, and Cys-55–Cys-85.

Expressed in epydiymis, in the caput. Also expressed in seminal vesicles.

It localises to the secreted. Probable serine protease inhibitor. This chain is Serine protease inhibitor Kazal-type 11 (Spink11), found in Mus musculus (Mouse).